Consider the following 199-residue polypeptide: N-(5'-phosphoribosyl)anthranilate isomerase (199 aa).

The protein belongs to the TrpF family.

The enzyme catalyses N-(5-phospho-beta-D-ribosyl)anthranilate = 1-(2-carboxyphenylamino)-1-deoxy-D-ribulose 5-phosphate. The protein operates within amino-acid biosynthesis; L-tryptophan biosynthesis; L-tryptophan from chorismate: step 3/5. This Streptococcus pneumoniae serotype 4 (strain ATCC BAA-334 / TIGR4) protein is N-(5'-phosphoribosyl)anthranilate isomerase.